Here is a 169-residue protein sequence, read N- to C-terminus: Lipoprotein signal peptidase (169 aa).

Transmembrane regions (helical) follow at residues 59-79 and 84-104; these read PTVL…YVIW and TTLF…NMID. Catalysis depends on residues D113 and D139. A helical membrane pass occupies residues 132-152; it reads WPIFNIADSAITIGACMLMIF.

Belongs to the peptidase A8 family.

The protein resides in the cell inner membrane. It catalyses the reaction Release of signal peptides from bacterial membrane prolipoproteins. Hydrolyzes -Xaa-Yaa-Zaa-|-(S,diacylglyceryl)Cys-, in which Xaa is hydrophobic (preferably Leu), and Yaa (Ala or Ser) and Zaa (Gly or Ala) have small, neutral side chains.. The protein operates within protein modification; lipoprotein biosynthesis (signal peptide cleavage). Functionally, this protein specifically catalyzes the removal of signal peptides from prolipoproteins. This Pelodictyon phaeoclathratiforme (strain DSM 5477 / BU-1) protein is Lipoprotein signal peptidase.